We begin with the raw amino-acid sequence, 199 residues long: Translation machinery-associated protein 22 (199 aa).

The 72-residue stretch at 97-168 (VVIRREARTK…EVEAYIHALL (72 aa)) folds into the SUI1 domain.

Belongs to the DENR family. In terms of assembly, interacts with the 40S ribosomal subunit.

The protein resides in the cytoplasm. The chain is Translation machinery-associated protein 22 (TMA22) from Eremothecium gossypii (strain ATCC 10895 / CBS 109.51 / FGSC 9923 / NRRL Y-1056) (Yeast).